A 607-amino-acid chain; its full sequence is Elongation factor 4 (607 aa).

Residues 11-193 (EKIRNFSIIA…QIVEKVPAPT (183 aa)) form the tr-type G domain. GTP is bound by residues 23-28 (DHGKST) and 140-143 (NKID).

Belongs to the TRAFAC class translation factor GTPase superfamily. Classic translation factor GTPase family. LepA subfamily.

The protein resides in the cell membrane. The catalysed reaction is GTP + H2O = GDP + phosphate + H(+). Functionally, required for accurate and efficient protein synthesis under certain stress conditions. May act as a fidelity factor of the translation reaction, by catalyzing a one-codon backward translocation of tRNAs on improperly translocated ribosomes. Back-translocation proceeds from a post-translocation (POST) complex to a pre-translocation (PRE) complex, thus giving elongation factor G a second chance to translocate the tRNAs correctly. Binds to ribosomes in a GTP-dependent manner. This chain is Elongation factor 4, found in Streptococcus gordonii (strain Challis / ATCC 35105 / BCRC 15272 / CH1 / DL1 / V288).